Consider the following 334-residue polypeptide: Galactosylgalactosylxylosylprotein 3-beta-glucuronosyltransferase 1 (334 aa).

Over 1–6 the chain is Cytoplasmic; sequence MPKRRD. The essential for transport from endoplasmic reticulum to Golgi apparatus and interaction with SAR1A stretch occupies residues 3–5; that stretch reads KRR. Residues 7 to 27 form a helical; Signal-anchor for type II membrane protein membrane-spanning segment; that stretch reads ILAIVLIVLPWTLLITVWHQS. The Lumenal segment spans residues 28 to 334; it reads SLAPLLAVHK…KGFTDPSVEI (307 aa). Position 91–93 (91–93) interacts with UDP-alpha-D-glucuronate; it reads PTY. Threonine 103 and threonine 108 each carry phosphothreonine. Aspartate 122 is a UDP-alpha-D-glucuronate binding site. N-linked (GlcNAc...) asparagine glycosylation occurs at asparagine 140. The UDP-alpha-D-glucuronate site is built by arginine 165 and arginine 170. A glycan (N-linked (GlcNAc...) asparagine) is linked at asparagine 184. 195-197 provides a ligand contact to UDP-alpha-D-glucuronate; sequence DDD. Mn(2+) is bound at residue aspartate 197. Positions 245–254 are interaction with galactose moiety of substrate glycoprotein; the sequence is FDPHRPFAID. Catalysis depends on glutamate 284, which acts as the Proton donor/acceptor. An N-linked (GlcNAc...) asparagine glycan is attached at asparagine 303. Residue 311–313 participates in UDP-alpha-D-glucuronate binding; sequence HTR.

Belongs to the glycosyltransferase 43 family. In terms of assembly, homodimer. Interacts with SAR1A. Mn(2+) is required as a cofactor. The soluble form derives from the membrane form by proteolytic processing.

It is found in the golgi apparatus membrane. The protein localises to the secreted. Its subcellular location is the endoplasmic reticulum membrane. The catalysed reaction is 3-O-(beta-D-galactosyl-(1-&gt;3)-beta-D-galactosyl-(1-&gt;4)-beta-D-xylosyl)-L-seryl-[protein] + UDP-alpha-D-glucuronate = 3-O-(beta-D-GlcA-(1-&gt;3)-beta-D-Gal-(1-&gt;3)-beta-D-Gal-(1-&gt;4)-beta-D-Xyl)-L-seryl-[protein] + UDP + H(+). It participates in protein modification; protein glycosylation. Functionally, involved in the biosynthesis of L2/HNK-1 carbohydrate epitope on glycoproteins. Can also play a role in glycosaminoglycan biosynthesis. Substrates include asialo-orosomucoid (ASOR), asialo-fetuin, and asialo-neural cell adhesion molecule. Requires sphingomyelin for activity: stearoyl-sphingomyelin was the most effective, followed by palmitoyl-sphingomyelin and lignoceroyl-sphingomyelin. Activity was demonstrated only for sphingomyelin with a saturated fatty acid and not for that with an unsaturated fatty acid, regardless of the length of the acyl group. In Mus musculus (Mouse), this protein is Galactosylgalactosylxylosylprotein 3-beta-glucuronosyltransferase 1.